The following is a 222-amino-acid chain: GTP cyclohydrolase 1 (222 aa).

Zn(2+) is bound by residues Cys111, His114, and Cys182.

It belongs to the GTP cyclohydrolase I family. Homomer.

It catalyses the reaction GTP + H2O = 7,8-dihydroneopterin 3'-triphosphate + formate + H(+). It functions in the pathway cofactor biosynthesis; 7,8-dihydroneopterin triphosphate biosynthesis; 7,8-dihydroneopterin triphosphate from GTP: step 1/1. This chain is GTP cyclohydrolase 1, found in Shigella boydii serotype 18 (strain CDC 3083-94 / BS512).